We begin with the raw amino-acid sequence, 196 residues long: Molybdenum cofactor guanylyltransferase (196 aa).

Residues 10–12, Lys23, Asn51, Asp69, and Asp99 each bind GTP; that span reads LAG. Asp99 contributes to the Mg(2+) binding site.

The protein belongs to the MobA family. Monomer. Mg(2+) serves as cofactor.

It is found in the cytoplasm. It carries out the reaction Mo-molybdopterin + GTP + H(+) = Mo-molybdopterin guanine dinucleotide + diphosphate. Functionally, transfers a GMP moiety from GTP to Mo-molybdopterin (Mo-MPT) cofactor (Moco or molybdenum cofactor) to form Mo-molybdopterin guanine dinucleotide (Mo-MGD) cofactor. This chain is Molybdenum cofactor guanylyltransferase, found in Shewanella baltica (strain OS185).